The sequence spans 33 residues: Neurotoxin Nk-3FTx (33 aa).

2 disulfide bridges follow: Cys-3–Cys-24 and Cys-6–Cys-11.

In terms of tissue distribution, expressed by the venom gland.

The protein resides in the secreted. Its function is as follows. Possible voltage-gated potassium channel (Kv) blocker. Decreases amplitude of compound action potential and conduction velocity in toad sciatic nerve. Has only mild anticoagulant activity even at a concentration of 5ug/ml. Shows no cytotoxicity towards human cell lines. In Naja kaouthia (Monocled cobra), this protein is Neurotoxin Nk-3FTx.